We begin with the raw amino-acid sequence, 273 residues long: 2-dehydro-3-deoxyphosphooctonate aldolase (273 aa).

It belongs to the KdsA family.

Its subcellular location is the cytoplasm. The enzyme catalyses D-arabinose 5-phosphate + phosphoenolpyruvate + H2O = 3-deoxy-alpha-D-manno-2-octulosonate-8-phosphate + phosphate. Its pathway is carbohydrate biosynthesis; 3-deoxy-D-manno-octulosonate biosynthesis; 3-deoxy-D-manno-octulosonate from D-ribulose 5-phosphate: step 2/3. The protein operates within bacterial outer membrane biogenesis; lipopolysaccharide biosynthesis. The chain is 2-dehydro-3-deoxyphosphooctonate aldolase from Nitratidesulfovibrio vulgaris (strain ATCC 29579 / DSM 644 / CCUG 34227 / NCIMB 8303 / VKM B-1760 / Hildenborough) (Desulfovibrio vulgaris).